The following is a 190-amino-acid chain: Double zinc ribbon protein MJ0416 (190 aa).

A DZANK-type zinc finger spans residues 134–183 (CPNCNNYISDSWKYCAHCGAKLKEEEEEVLRCPNCKRPVQPEWIVCPYCG).

In Methanocaldococcus jannaschii (strain ATCC 43067 / DSM 2661 / JAL-1 / JCM 10045 / NBRC 100440) (Methanococcus jannaschii), this protein is Double zinc ribbon protein MJ0416.